The primary structure comprises 108 residues: Protein YcgL (108 aa).

The YcgL domain occupies 12–96 (MFCVIYRSSK…PPEDLLKQHL (85 aa)).

The sequence is that of Protein YcgL from Escherichia coli O127:H6 (strain E2348/69 / EPEC).